The chain runs to 547 residues: CTP synthase (547 aa).

Positions 1–269 (MKTKFIFVTG…DQKVAIMLRL (269 aa)) are amidoligase domain. Serine 14 contributes to the CTP binding site. Residue serine 14 participates in UTP binding. ATP-binding positions include 15 to 20 (SLGKGL) and aspartate 72. Mg(2+) is bound by residues aspartate 72 and glutamate 143. CTP is bound by residues 150-152 (DIE), 190-195 (KTKPTQ), and lysine 226. UTP-binding positions include 190–195 (KTKPTQ) and lysine 226. Positions 294–547 (TVAIVGKYVD…IGAAKKHAKV (254 aa)) constitute a Glutamine amidotransferase type-1 domain. Glycine 356 provides a ligand contact to L-glutamine. Cysteine 383 acts as the Nucleophile; for glutamine hydrolysis in catalysis. Residues 384–387 (LGMQ), glutamate 407, and arginine 475 contribute to the L-glutamine site. Catalysis depends on residues histidine 520 and glutamate 522.

Belongs to the CTP synthase family. As to quaternary structure, homotetramer.

It catalyses the reaction UTP + L-glutamine + ATP + H2O = CTP + L-glutamate + ADP + phosphate + 2 H(+). The catalysed reaction is L-glutamine + H2O = L-glutamate + NH4(+). The enzyme catalyses UTP + NH4(+) + ATP = CTP + ADP + phosphate + 2 H(+). Its pathway is pyrimidine metabolism; CTP biosynthesis via de novo pathway; CTP from UDP: step 2/2. With respect to regulation, allosterically activated by GTP, when glutamine is the substrate; GTP has no effect on the reaction when ammonia is the substrate. The allosteric effector GTP functions by stabilizing the protein conformation that binds the tetrahedral intermediate(s) formed during glutamine hydrolysis. Inhibited by the product CTP, via allosteric rather than competitive inhibition. Catalyzes the ATP-dependent amination of UTP to CTP with either L-glutamine or ammonia as the source of nitrogen. Regulates intracellular CTP levels through interactions with the four ribonucleotide triphosphates. The sequence is that of CTP synthase from Desulfovibrio desulfuricans (strain ATCC 27774 / DSM 6949 / MB).